The sequence spans 968 residues: RNA polymerase-associated protein RapA (968 aa).

Residues 164-334 (DVGRRHAPRV…FARLRLLDPN (171 aa)) enclose the Helicase ATP-binding domain. ATP is bound at residue 177-184 (DEVGLGKT). A DEAH box motif is present at residues 280-283 (DEAH). One can recognise a Helicase C-terminal domain in the interval 490–662 (RVEWLMGYLT…YLAAPENTEG (173 aa)).

Belongs to the SNF2/RAD54 helicase family. RapA subfamily. As to quaternary structure, interacts with the RNAP. Has a higher affinity for the core RNAP than for the holoenzyme. Its ATPase activity is stimulated by binding to RNAP.

Transcription regulator that activates transcription by stimulating RNA polymerase (RNAP) recycling in case of stress conditions such as supercoiled DNA or high salt concentrations. Probably acts by releasing the RNAP, when it is trapped or immobilized on tightly supercoiled DNA. Does not activate transcription on linear DNA. Probably not involved in DNA repair. The polypeptide is RNA polymerase-associated protein RapA (Cronobacter sakazakii (strain ATCC BAA-894) (Enterobacter sakazakii)).